We begin with the raw amino-acid sequence, 246 residues long: Biosynthetic peptidoglycan transglycosylase (246 aa).

The chain crosses the membrane as a helical span at residues 28–48 (FALFLVLFLSSVVLFRFVPVP).

The protein belongs to the glycosyltransferase 51 family.

It is found in the cell inner membrane. It carries out the reaction [GlcNAc-(1-&gt;4)-Mur2Ac(oyl-L-Ala-gamma-D-Glu-L-Lys-D-Ala-D-Ala)](n)-di-trans,octa-cis-undecaprenyl diphosphate + beta-D-GlcNAc-(1-&gt;4)-Mur2Ac(oyl-L-Ala-gamma-D-Glu-L-Lys-D-Ala-D-Ala)-di-trans,octa-cis-undecaprenyl diphosphate = [GlcNAc-(1-&gt;4)-Mur2Ac(oyl-L-Ala-gamma-D-Glu-L-Lys-D-Ala-D-Ala)](n+1)-di-trans,octa-cis-undecaprenyl diphosphate + di-trans,octa-cis-undecaprenyl diphosphate + H(+). Its pathway is cell wall biogenesis; peptidoglycan biosynthesis. Functionally, peptidoglycan polymerase that catalyzes glycan chain elongation from lipid-linked precursors. The sequence is that of Biosynthetic peptidoglycan transglycosylase from Pasteurella multocida (strain Pm70).